Consider the following 880-residue polypeptide: Interference hedgehog (880 aa).

The N-terminal stretch at 1-20 is a signal peptide; that stretch reads MTLLTSSLLLFSLLTSRLEA. Over 21-703 the chain is Extracellular; the sequence is IPVLEKSPAH…ETFNMSPMLT (683 aa). 4 Ig-like C2-type domains span residues 45–142, 132–232, 252–340, and 346–432; these read PGVR…TARL, PLVV…ERIQ, PHLL…YIKV, and PQIV…LQVN. 4 cysteine pairs are disulfide-bonded: C68-C126, C173-C220, C276-C324, and C367-C414. Residues N102 and N209 are each glycosylated (N-linked (GlcNAc...) asparagine). The disordered stretch occupies residues 426-467; sequence GTLLQVNPKQIQEPRESGGTHRPKPNQGSKQKQMYPPTPPNV. Fibronectin type-III domains lie at 461–567 and 575–670; these read PPTP…LQPG and VPEL…TQRP. N-linked (GlcNAc...) asparagine glycosylation is present at N466. Residues R497, K501, K503, and R541 each contribute to the heparin site. N-linked (GlcNAc...) asparagine glycosylation occurs at N557. A disordered region spans residues 662 to 697; it reads LKQGRTQRPKTSTTEEPTLQMGDRDTTTPSHNETFN. Polar residues-rich tracts occupy residues 665–678 and 688–697; these read GRTQ…TEEP and TTPSHNETFN. N-linked (GlcNAc...) asparagine glycosylation is present at N693. Residues 704–724 form a helical membrane-spanning segment; that stretch reads GTIGGGAVLILLLISTCLCVC. The Cytoplasmic portion of the chain corresponds to 725 to 880; the sequence is RRRTSRSRGN…SSGSLNSVGV (156 aa). Disordered stretches follow at residues 728–762 and 775–880; these read TSRS…QRQR and QQQQ…SVGV. Low complexity-rich tracts occupy residues 823 to 837 and 864 to 880; these read RAGG…NNNN and SSRS…SVGV.

It belongs to the immunoglobulin superfamily. IHOG family. In terms of assembly, homodimer. Heterotetramer; 2 iHog chains bind 2 hh chains when facilitated by heparin, heparin is required to promote high-affinity interactions between hh and iHog.

The protein localises to the membrane. Functionally, mediates response to the active Hedgehog (Hh) protein signal in embryos, functioning upstream or at the level of patched (ptc). The chain is Interference hedgehog from Drosophila sechellia (Fruit fly).